Here is a 397-residue protein sequence, read N- to C-terminus: Succinate--CoA ligase [ADP-forming] subunit beta (397 aa).

Positions 9–244 (KEIMKQYGIS…LTEEDPREVQ (236 aa)) constitute an ATP-grasp domain. Residues Lys-46, 53 to 55 (GRG), Glu-99, Leu-102, and Glu-107 each bind ATP. The Mg(2+) site is built by Asn-199 and Asp-213. Substrate-binding positions include Asn-264 and 321 to 323 (GIM).

This sequence belongs to the succinate/malate CoA ligase beta subunit family. In terms of assembly, heterotetramer of two alpha and two beta subunits. Requires Mg(2+) as cofactor.

The enzyme catalyses succinate + ATP + CoA = succinyl-CoA + ADP + phosphate. It catalyses the reaction GTP + succinate + CoA = succinyl-CoA + GDP + phosphate. It participates in carbohydrate metabolism; tricarboxylic acid cycle; succinate from succinyl-CoA (ligase route): step 1/1. Functionally, succinyl-CoA synthetase functions in the citric acid cycle (TCA), coupling the hydrolysis of succinyl-CoA to the synthesis of either ATP or GTP and thus represents the only step of substrate-level phosphorylation in the TCA. The beta subunit provides nucleotide specificity of the enzyme and binds the substrate succinate, while the binding sites for coenzyme A and phosphate are found in the alpha subunit. The chain is Succinate--CoA ligase [ADP-forming] subunit beta from Alkaliphilus metalliredigens (strain QYMF).